Here is a 163-residue protein sequence, read N- to C-terminus: Xanthine-guanine phosphoribosyltransferase (163 aa).

Residues 43–44 (RG) and 95–103 (DDLADTGGT) each bind 5-phospho-alpha-D-ribose 1-diphosphate. Aspartate 96 is a binding site for Mg(2+). Residues aspartate 99 and isoleucine 142 each coordinate guanine. Aspartate 99 and isoleucine 142 together coordinate xanthine. GMP-binding positions include 99–103 (DTGGT) and 141–142 (WI).

Belongs to the purine/pyrimidine phosphoribosyltransferase family. XGPT subfamily. In terms of assembly, homotetramer. The cofactor is Mg(2+).

The protein resides in the cell inner membrane. It carries out the reaction GMP + diphosphate = guanine + 5-phospho-alpha-D-ribose 1-diphosphate. It catalyses the reaction XMP + diphosphate = xanthine + 5-phospho-alpha-D-ribose 1-diphosphate. The enzyme catalyses IMP + diphosphate = hypoxanthine + 5-phospho-alpha-D-ribose 1-diphosphate. The protein operates within purine metabolism; GMP biosynthesis via salvage pathway; GMP from guanine: step 1/1. It participates in purine metabolism; XMP biosynthesis via salvage pathway; XMP from xanthine: step 1/1. Functionally, purine salvage pathway enzyme that catalyzes the transfer of the ribosyl-5-phosphate group from 5-phospho-alpha-D-ribose 1-diphosphate (PRPP) to the N9 position of the 6-oxopurines guanine and xanthine to form the corresponding ribonucleotides GMP (guanosine 5'-monophosphate) and XMP (xanthosine 5'-monophosphate), with the release of PPi. To a lesser extent, also acts on hypoxanthine. The chain is Xanthine-guanine phosphoribosyltransferase from Nitratidesulfovibrio vulgaris (strain ATCC 29579 / DSM 644 / CCUG 34227 / NCIMB 8303 / VKM B-1760 / Hildenborough) (Desulfovibrio vulgaris).